The primary structure comprises 340 residues: Uroporphyrinogen decarboxylase (340 aa).

Residues 23-27 (RQAGR), Asp72, Tyr147, Thr202, and His316 each bind substrate.

It belongs to the uroporphyrinogen decarboxylase family. Homodimer.

The protein resides in the cytoplasm. The enzyme catalyses uroporphyrinogen III + 4 H(+) = coproporphyrinogen III + 4 CO2. It participates in porphyrin-containing compound metabolism; protoporphyrin-IX biosynthesis; coproporphyrinogen-III from 5-aminolevulinate: step 4/4. Functionally, catalyzes the decarboxylation of four acetate groups of uroporphyrinogen-III to yield coproporphyrinogen-III. This is Uroporphyrinogen decarboxylase from Pelobacter propionicus (strain DSM 2379 / NBRC 103807 / OttBd1).